Consider the following 68-residue polypeptide: DNA-directed RNA polymerase subunit omega (68 aa).

Belongs to the RNA polymerase subunit omega family. The RNAP catalytic core consists of 2 alpha, 1 beta, 1 beta' and 1 omega subunit. When a sigma factor is associated with the core the holoenzyme is formed, which can initiate transcription.

It catalyses the reaction RNA(n) + a ribonucleoside 5'-triphosphate = RNA(n+1) + diphosphate. Its function is as follows. Promotes RNA polymerase assembly. Latches the N- and C-terminal regions of the beta' subunit thereby facilitating its interaction with the beta and alpha subunits. The chain is DNA-directed RNA polymerase subunit omega from Desulfatibacillum aliphaticivorans.